Consider the following 130-residue polypeptide: Albumin-1 A (130 aa).

The N-terminal stretch at 1–26 (MASVKLASLIVLFATLGMFLTKNVGA) is a signal peptide. 3 cysteine pairs are disulfide-bonded: Cys29-Cys46, Cys33-Cys48, and Cys41-Cys58. 2 consecutive propeptides follow at residues 64–69 (VFLRTN) and 123–130 (LLKSVSTA).

Post-translationally, the C-terminal glycine may be removed from PA1b. Major component of both the cotyledons and embryonic axes of mature seeds.

Functionally, PA1b binds to basic 7S globulin (BG) and stimulates its phosphorylation activity. Involved in the signal transduction system to regulate the growth and differentiation as a hormone peptide. Toxic to various insects through binding to a high affinity binding site in the insect gut. The polypeptide is Albumin-1 A (Pisum sativum (Garden pea)).